The primary structure comprises 307 residues: Ribosomal RNA small subunit methyltransferase H (307 aa).

S-adenosyl-L-methionine-binding positions include 33-35 (GGH), Asp-52, Leu-83, Asp-97, and Gln-104.

It belongs to the methyltransferase superfamily. RsmH family.

The protein resides in the cytoplasm. The catalysed reaction is cytidine(1402) in 16S rRNA + S-adenosyl-L-methionine = N(4)-methylcytidine(1402) in 16S rRNA + S-adenosyl-L-homocysteine + H(+). Functionally, specifically methylates the N4 position of cytidine in position 1402 (C1402) of 16S rRNA. This is Ribosomal RNA small subunit methyltransferase H from Campylobacter fetus subsp. fetus (strain 82-40).